We begin with the raw amino-acid sequence, 316 residues long: Ribonuclease Z (316 aa).

Positions 59, 61, 63, 64, 135, 203, and 261 each coordinate Zn(2+). D63 functions as the Proton acceptor in the catalytic mechanism.

The protein belongs to the RNase Z family. As to quaternary structure, homodimer. Zn(2+) is required as a cofactor.

The catalysed reaction is Endonucleolytic cleavage of RNA, removing extra 3' nucleotides from tRNA precursor, generating 3' termini of tRNAs. A 3'-hydroxy group is left at the tRNA terminus and a 5'-phosphoryl group is left at the trailer molecule.. Functionally, zinc phosphodiesterase, which displays some tRNA 3'-processing endonuclease activity. Probably involved in tRNA maturation, by removing a 3'-trailer from precursor tRNA. The chain is Ribonuclease Z from Nanoarchaeum equitans (strain Kin4-M).